Consider the following 114-residue polypeptide: Transmembrane protein 14B (114 aa).

The next 4 membrane-spanning stretches (helical) occupy residues 8-28, 34-54, 60-80, and 83-103; these read LVPL…GGIV, GSVP…LGAY, PRNV…VMGM, and YYYG…LMAA.

The protein belongs to the TMEM14 family. As to quaternary structure, interacts with IQGAP1; this interaction promotes phosphorylation and nuclear translocation of IQGAP1. As to expression, mainly expressed in the outer subventricular zone (OSVZ) of the fetal brains.

The protein localises to the membrane. Its function is as follows. Primate-specific protein involved in cortical expansion and folding in the developing neocortex. May drive neural progenitor proliferation through nuclear translocation of IQGAP1, which in turn promotes G1/S cell cycle transitions. In Homo sapiens (Human), this protein is Transmembrane protein 14B (TMEM14B).